Consider the following 445-residue polypeptide: Histamine H3 receptor (445 aa).

The Extracellular segment spans residues 1–40 (MERAPPDGLMNASGALAGEAAAAAGGARTFSAAWTAVLAA). An N-linked (GlcNAc...) asparagine glycan is attached at N11. Residues 41 to 61 (LMALLIVATVLGNALVMLAFV) form a helical membrane-spanning segment. Over 62–71 (ADSSLRTQNN) the chain is Cytoplasmic. A helical membrane pass occupies residues 72–92 (FFLLNLAISDFLVGVFCIPLY). Residues 93–109 (VPYVLTGRWTFGRGLCK) are Extracellular-facing. C108 and C189 form a disulfide bridge. Residues 110-130 (LWLVVDYLLCTSSVFNIVLIS) form a helical membrane-spanning segment. The Cytoplasmic portion of the chain corresponds to 131–157 (YDRFLSVTRAVSYRAQQGDTRRAVRKM). Residues 158–178 (VLVWVLAFLLYGPAILSWEYL) traverse the membrane as a helical segment. Residues 179-197 (SGGSSIPEGHCYAEFFYNW) are Extracellular-facing. Residues 198–218 (YFLITASTLEFFTPFLSVTFF) form a helical membrane-spanning segment. Residues 219–359 (NLSIYLNIQR…LSRDKKVAKS (141 aa)) lie on the Cytoplasmic side of the membrane. Disordered regions lie at residues 236–264 (GGAR…WGCW) and 288–336 (AGEA…LEKR). Positions 299-312 (AAASPTSSSGSSSR) are enriched in low complexity. A helical membrane pass occupies residues 360–380 (LAIIVSIFGLCWAPYTLLMII). The Extracellular segment spans residues 381-398 (RAACHGHCVPDYWYETSF). Residues 399 to 419 (WLLWANSAVNPVLYPLCHYSF) traverse the membrane as a helical segment. Over 420–445 (RRAFTKLLCPQKLKVQPHSSLEHCWK) the chain is Cytoplasmic. At S439 the chain carries Phosphoserine.

The protein belongs to the G-protein coupled receptor 1 family. In terms of tissue distribution, expressed widely and abundantly throughout the brain. Highly expressed in discrete neuronal populations such as pyramidal cells in cerebral cortex or cerebellar Purkinje cells.

Its subcellular location is the cell membrane. Functionally, the H3 subclass of histamine receptors could mediate the histamine signals in CNS and peripheral nervous system. Signals through the inhibition of adenylate cyclase and displays high constitutive activity (spontaneous activity in the absence of agonist). The protein is Histamine H3 receptor (HRH3) of Cavia porcellus (Guinea pig).